Here is a 1520-residue protein sequence, read N- to C-terminus: Integrator complex subunit 3 homolog (1520 aa).

Disordered stretches follow at residues Met1 to Thr23, Gln523 to Val671, Val689 to Thr801, Asp813 to Lys922, Phe1116 to Asn1177, and Gln1489 to Glu1520. 2 stretches are compositionally biased toward low complexity: residues Gln527–Pro549 and Gln557–Pro595. A compositionally biased stretch (pro residues) spans Pro596 to Gln612. Low complexity predominate over residues Gln613–Leu625. The span at Asn626–Met639 shows a compositional bias: polar residues. Composition is skewed to low complexity over residues Ser642–Ser669, Pro694–Leu717, and Gln725–Gln735. Over residues Ile736–Ser752 the composition is skewed to polar residues. The segment covering Ser768–Ile789 has biased composition (low complexity). A compositionally biased stretch (polar residues) spans Ser819–Ile828. Low complexity predominate over residues Pro837 to Ile882. Residues Gln898 to Ser918 show a composition bias toward pro residues. 2 stretches are compositionally biased toward low complexity: residues Phe1116–Asn1130 and Gln1137–Asn1177. Polar residues predominate over residues Gln1489–His1504.

The protein belongs to the Integrator subunit 3 family. Component of the Integrator complex. The core complex associates with protein phosphatase 2A subunits, to form the Integrator-PP2A (INTAC) complex. Component of the SOSS complex.

It localises to the nucleus. The protein localises to the cytoplasm. Functionally, component of the integrator complex, a multiprotein complex that terminates RNA polymerase II (Pol II) transcription in the promoter-proximal region of genes. The integrator complex provides a quality checkpoint during transcription elongation by driving premature transcription termination of transcripts that are unfavorably configured for transcriptional elongation: the complex terminates transcription by (1) catalyzing dephosphorylation of the C-terminal domain (CTD) of Pol II subunit polr2a, (2) degrading the exiting nascent RNA transcript via endonuclease activity and (3) promoting the release of Pol II from bound DNA. The integrator complex is also involved in terminating the synthesis of non-coding Pol II transcripts, such as enhancer RNAs (eRNAs), small nuclear RNAs (snRNAs), telomerase RNAs and long non-coding RNAs (lncRNAs). Component of the SOSS complex, a multiprotein complex that functions downstream of the MRN complex to promote DNA repair and G2/M checkpoint. The SOSS complex associates with single-stranded DNA at DNA lesions and influences diverse endpoints in the cellular DNA damage response including cell-cycle checkpoint activation, recombinational repair and maintenance of genomic stability. The SOSS complex is required for efficient homologous recombination-dependent repair of double-strand breaks (DSBs) and ATM-dependent signaling pathways. In the SOSS complex, it is required for the assembly of the complex and for stabilization of the complex at DNA damage sites. This is Integrator complex subunit 3 homolog (ints3) from Dictyostelium discoideum (Social amoeba).